Reading from the N-terminus, the 322-residue chain is Secreted effector protein SseI (322 aa).

Interacts with host IQGAP1 and host TRIP6 (thyroid receptor-interacting protein 6).

It localises to the secreted. Its subcellular location is the host cytoplasm. Functionally, effector proteins function to alter host cell physiology and promote bacterial survival in host tissues. This protein is required to maintain a long-term chronic systemic infection in mice. It inhibits normal cell migration of primary macrophages and dendritic cells, by a mechanism that involves interaction with the host factor IQGAP1, an important regulator of the cytoskeleton and cell migration. Also accelerates the systemic spread of infection from the gastrointestinal tract to the bloodstream, probably by interacting with host TRIP6. The sequence is that of Secreted effector protein SseI (sseI) from Salmonella typhimurium (strain LT2 / SGSC1412 / ATCC 700720).